The chain runs to 231 residues: GDSL lipase Rv0518 (231 aa).

An N-terminal signal peptide occupies residues 1 to 20 (MSRPGTYVIGLTLLVGLVVG). The active-site Nucleophile is the Ser-46. The active-site Proton donor is the Asp-205. His-208 acts as the Proton acceptor in catalysis.

The protein belongs to the 'GDSL' lipolytic enzyme family.

Its subcellular location is the secreted. It localises to the cell wall. The protein resides in the extracellular space. It carries out the reaction a fatty acid ester + H2O = an aliphatic alcohol + a fatty acid + H(+). The enzyme catalyses decanoate ester + H2O = decanoate + an aliphatic alcohol + H(+). The catalysed reaction is an octanoate ester + H2O = an aliphatic alcohol + octanoate + H(+). It catalyses the reaction a dodecanoate ester + H2O = an aliphatic alcohol + dodecanoate + H(+). It carries out the reaction a tetradecanoate ester + H2O = an aliphatic alcohol + tetradecanoate + H(+). With respect to regulation, activity is inhibited by the serine modifier phenylmethylsulfonyl fluoride (PMSF). In terms of biological role, GDSL lipase that catalyzes the hydrolysis of p-nitrophenyl (pNP) esters. pNP-decanoate (C10) is the preferred substrate. It can also use pNP-octanoate (C8), pNP-dodecanoate (C12) and pNP-tetradecanoate (C14). Has lower activity with pNP-butyrate (C4), pNP-palmitate (C16) and pNP-stearate (C18). Does not show phospholipase A1 activity. Might help bacteria to utilize available lipids for its growth as well as provide resistance to various intracellular stresses by cell wall modulation resulting in enhanced intracellular survival. In Mycobacterium tuberculosis (strain ATCC 25618 / H37Rv), this protein is GDSL lipase Rv0518.